The primary structure comprises 375 residues: o-succinylbenzoate synthase (375 aa).

The Proton donor role is filled by lysine 166. Residues aspartate 191, glutamate 216, and aspartate 241 each contribute to the Mg(2+) site. Residue lysine 265 is the Proton acceptor of the active site.

It belongs to the mandelate racemase/muconate lactonizing enzyme family. MenC type 2 subfamily. Homotetramer. A divalent metal cation serves as cofactor.

The catalysed reaction is (1R,6R)-6-hydroxy-2-succinyl-cyclohexa-2,4-diene-1-carboxylate = 2-succinylbenzoate + H2O. It catalyses the reaction N-acetyl-D-methionine = N-acetyl-L-methionine. It carries out the reaction N-acetyl-D-phenylalanine = N-acetyl-L-phenylalanine. Its pathway is quinol/quinone metabolism; 1,4-dihydroxy-2-naphthoate biosynthesis; 1,4-dihydroxy-2-naphthoate from chorismate: step 4/7. It participates in quinol/quinone metabolism; menaquinone biosynthesis. Converts 2-succinyl-6-hydroxy-2,4-cyclohexadiene-1-carboxylate (SHCHC) to 2-succinylbenzoate (OSB). Also acts as a N-succinylamino acid racemase (NSAR) that catalyzes the racemization of various N-succinylamino acids, including N-succinyl-alanine and N-succinyl-phenylalanine. Can catalyze the racemization of a broad range of N-acylamino acids, including N-acetyl-methionine, N-acetyl-phenylalanine, N-carbamoyl-methionine, N-formyl-D-methionine, N-formyl-D-norleucine and N-carbamoyl-D-norleucine. May be a bifunctional enzyme involved in menaquinone biosynthesis and in an irreversible pathway for the conversion of D- to L-amino acids, thereby facilitating the survival and/or growth of the organism. The sequence is that of o-succinylbenzoate synthase from Geobacillus kaustophilus.